The following is a 557-amino-acid chain: Dihydroxy-acid dehydratase 2 (557 aa).

Cys-50 contacts [2Fe-2S] cluster. Asp-82 contributes to the Mg(2+) binding site. [2Fe-2S] cluster is bound at residue Cys-123. Mg(2+) contacts are provided by Asp-124 and Lys-125. Position 125 is an N6-carboxylysine (Lys-125). Cys-195 provides a ligand contact to [2Fe-2S] cluster. A Mg(2+)-binding site is contributed by Glu-447. The active-site Proton acceptor is Ser-473.

It belongs to the IlvD/Edd family. Homodimer. [2Fe-2S] cluster serves as cofactor. It depends on Mg(2+) as a cofactor.

It catalyses the reaction (2R)-2,3-dihydroxy-3-methylbutanoate = 3-methyl-2-oxobutanoate + H2O. It carries out the reaction (2R,3R)-2,3-dihydroxy-3-methylpentanoate = (S)-3-methyl-2-oxopentanoate + H2O. The protein operates within amino-acid biosynthesis; L-isoleucine biosynthesis; L-isoleucine from 2-oxobutanoate: step 3/4. It participates in amino-acid biosynthesis; L-valine biosynthesis; L-valine from pyruvate: step 3/4. Functionally, functions in the biosynthesis of branched-chain amino acids. Catalyzes the dehydration of (2R,3R)-2,3-dihydroxy-3-methylpentanoate (2,3-dihydroxy-3-methylvalerate) into 2-oxo-3-methylpentanoate (2-oxo-3-methylvalerate) and of (2R)-2,3-dihydroxy-3-methylbutanoate (2,3-dihydroxyisovalerate) into 2-oxo-3-methylbutanoate (2-oxoisovalerate), the penultimate precursor to L-isoleucine and L-valine, respectively. The protein is Dihydroxy-acid dehydratase 2 of Burkholderia lata (strain ATCC 17760 / DSM 23089 / LMG 22485 / NCIMB 9086 / R18194 / 383).